The primary structure comprises 153 residues: Ribosome maturation factor RimP (153 aa).

Belongs to the RimP family.

The protein resides in the cytoplasm. In terms of biological role, required for maturation of 30S ribosomal subunits. The protein is Ribosome maturation factor RimP of Coxiella burnetii (strain CbuK_Q154) (Coxiella burnetii (strain Q154)).